A 608-amino-acid polypeptide reads, in one-letter code: Elongation factor 4 (608 aa).

In terms of domain architecture, tr-type G spans 11-193 (KKIRNFSIIA…QIVEKVPEPS (183 aa)). GTP contacts are provided by residues 23 to 28 (DHGKST) and 140 to 143 (NKID).

The protein belongs to the TRAFAC class translation factor GTPase superfamily. Classic translation factor GTPase family. LepA subfamily.

Its subcellular location is the cell membrane. It catalyses the reaction GTP + H2O = GDP + phosphate + H(+). Its function is as follows. Required for accurate and efficient protein synthesis under certain stress conditions. May act as a fidelity factor of the translation reaction, by catalyzing a one-codon backward translocation of tRNAs on improperly translocated ribosomes. Back-translocation proceeds from a post-translocation (POST) complex to a pre-translocation (PRE) complex, thus giving elongation factor G a second chance to translocate the tRNAs correctly. Binds to ribosomes in a GTP-dependent manner. This is Elongation factor 4 from Listeria monocytogenes serotype 4b (strain CLIP80459).